We begin with the raw amino-acid sequence, 372 residues long: NAD(P)H-quinone oxidoreductase subunit 1 (372 aa).

9 helical membrane-spanning segments follow: residues 27-47 (AIWM…GVLV), 65-85 (PEYI…KLVF), 97-117 (WLFT…YLIV), 128-148 (VGTG…GLLM), 166-186 (AAQS…IVMM), 204-224 (ILGW…IAAL), 266-286 (ILSA…PIPI), 308-328 (ALGI…AILL), and 347-367 (FLLP…LAFP).

Belongs to the complex I subunit 1 family. NDH-1 is composed of at least 11 different subunits.

The protein resides in the cellular thylakoid membrane. It carries out the reaction a plastoquinone + NADH + (n+1) H(+)(in) = a plastoquinol + NAD(+) + n H(+)(out). It catalyses the reaction a plastoquinone + NADPH + (n+1) H(+)(in) = a plastoquinol + NADP(+) + n H(+)(out). Its function is as follows. NDH-1 shuttles electrons from an unknown electron donor, via FMN and iron-sulfur (Fe-S) centers, to quinones in the respiratory and/or the photosynthetic chain. The immediate electron acceptor for the enzyme in this species is believed to be plastoquinone. Couples the redox reaction to proton translocation, and thus conserves the redox energy in a proton gradient. This Nostoc sp. (strain PCC 7120 / SAG 25.82 / UTEX 2576) protein is NAD(P)H-quinone oxidoreductase subunit 1.